Reading from the N-terminus, the 607-residue chain is Dopamine receptor 3 (607 aa).

At methionine 1–alanine 23 the chain is on the extracellular side. Residues alanine 24–methionine 44 traverse the membrane as a helical segment. Residues serine 45–methionine 58 lie on the Cytoplasmic side of the membrane. A helical membrane pass occupies residues leucine 59–valine 79. At tyrosine 80–histidine 96 the chain is on the extracellular side. A disulfide bridge connects residues cysteine 95 and cysteine 173. A helical membrane pass occupies residues valine 97–serine 117. Topologically, residues leucine 118–methionine 141 are cytoplasmic. A helical transmembrane segment spans residues isoleucine 142 to valine 162. The Extracellular segment spans residues asparagine 163–methionine 182. Residues isoleucine 183 to isoleucine 203 traverse the membrane as a helical segment. Residues phenylalanine 204–alanine 523 lie on the Cytoplasmic side of the membrane. The disordered stretch occupies residues valine 402–proline 435. The span at glutamine 413–asparagine 424 shows a compositional bias: polar residues. A helical membrane pass occupies residues threonine 524–leucine 544. The Extracellular portion of the chain corresponds to histidine 545–serine 558. Residues alanine 559–leucine 579 traverse the membrane as a helical segment. Topologically, residues asparagine 580–arginine 607 are cytoplasmic.

Belongs to the G-protein coupled receptor 1 family. In terms of tissue distribution, expressed in the neurons of the head, ventral cord and tail with weak expression observed in body wall muscles and PVD neurons. In the ventral cord, expressed strongly in GABAergic neurons with weaker expression in cholinergic motor neurons. Expressed in cholinergic SIA neurons and octopaminergic RIC neurons. In males, expressed in the dorsal and ventral spicule protractor and retractor muscles, and the sensory post-cloacal sensilla B (PCB) neuron. Expressed in the head acetylcholine neurons. Expressed in the AVA, AVB, AVD and AVE command interneurons. Expressed in premotor interneurons.

It localises to the cell membrane. Its function is as follows. G-protein coupled receptor which binds to the neurotransmitter dopamine with high affinity leading to the activation of an associated G-protein and downstream signaling pathways. Couples to G-proteins to inhibit adenylate cyclase (AC) activity and cAMP production. Antagonizes the D1-like dopamine receptor dop-1 to negatively regulate the rate of locomotion. Negatively regulates locomotion through the activation of goa-1 subunit proteins which inactivates the unc-77/nca-1 and nca-2 ion-channels in the command interneurons. Inhibits early-stage swimming by modulating the unc-77/nca-1 and nca-2 ion channels of premotor interneurons. In GABAergic, RIC, and SIA neurons, antagonizes the function of dop-1 to play a role in behavioral plasticity and regulate the decision-making process when conflicting alternatives are present. Antagonizes octopamine signaling in response to food by promoting the dopamine-mediated suppression of crh-1/CREB1 transcription factor activation in cholinergic SIA neurons. This is most likely in association with the G(o)-alpha G-protein subunit goa-1. Promotes male mating behavior by antagonizing acetylcholine signaling to control the protrusion of copulatory spicules from the tail of males during hermaphrodite vulval location. Under mitochondria stress, plays a role in bacterial preference, resulting in learned avoidance behavior. The polypeptide is Dopamine receptor 3 (Caenorhabditis elegans).